The primary structure comprises 369 residues: Phenylalanine--tRNA ligase alpha subunit (369 aa).

Mg(2+) is bound at residue Glu269.

This sequence belongs to the class-II aminoacyl-tRNA synthetase family. Phe-tRNA synthetase alpha subunit type 1 subfamily. In terms of assembly, tetramer of two alpha and two beta subunits. Requires Mg(2+) as cofactor.

The protein resides in the cytoplasm. The catalysed reaction is tRNA(Phe) + L-phenylalanine + ATP = L-phenylalanyl-tRNA(Phe) + AMP + diphosphate + H(+). The polypeptide is Phenylalanine--tRNA ligase alpha subunit (Brucella anthropi (strain ATCC 49188 / DSM 6882 / CCUG 24695 / JCM 21032 / LMG 3331 / NBRC 15819 / NCTC 12168 / Alc 37) (Ochrobactrum anthropi)).